Consider the following 506-residue polypeptide: U3 small nucleolar RNA-associated protein 18 homolog (506 aa).

The span at 1–11 (MSSDESSDGLE) shows a compositional bias: acidic residues. Disordered stretches follow at residues 1 to 44 (MSSD…SQAK) and 69 to 126 (AKSV…PLNH). Positions 24–37 (EQEKPAKIKRERYI) are enriched in basic and acidic residues. 4 positions are modified to phosphoserine: Ser-102, Ser-104, Ser-164, and Ser-165. WD repeat units follow at residues 203-242 (YAEG…NERL), 331-370 (KQEG…IEHI), 372-413 (MDDG…ASKA), and 469-505 (EKVG…YFKG).

It belongs to the WD repeat UTP18 family. As to quaternary structure, component of U3 snoRNP complex.

The protein resides in the nucleus. It localises to the nucleolus. In terms of biological role, component of a nucleolar small nuclear ribonucleoprotein particle (snoRNP) thought to participate in the processing and modification of pre-ribosomal RNA. Regulation of cell size by ribosome synthesis is an important parameter for stem cell maintenance and function. This Drosophila melanogaster (Fruit fly) protein is U3 small nucleolar RNA-associated protein 18 homolog (wcd).